Consider the following 255-residue polypeptide: Imidazole glycerol phosphate synthase subunit HisF (255 aa).

Catalysis depends on residues Asp12 and Asp131.

It belongs to the HisA/HisF family. In terms of assembly, heterodimer of HisH and HisF.

Its subcellular location is the cytoplasm. The enzyme catalyses 5-[(5-phospho-1-deoxy-D-ribulos-1-ylimino)methylamino]-1-(5-phospho-beta-D-ribosyl)imidazole-4-carboxamide + L-glutamine = D-erythro-1-(imidazol-4-yl)glycerol 3-phosphate + 5-amino-1-(5-phospho-beta-D-ribosyl)imidazole-4-carboxamide + L-glutamate + H(+). It participates in amino-acid biosynthesis; L-histidine biosynthesis; L-histidine from 5-phospho-alpha-D-ribose 1-diphosphate: step 5/9. Functionally, IGPS catalyzes the conversion of PRFAR and glutamine to IGP, AICAR and glutamate. The HisF subunit catalyzes the cyclization activity that produces IGP and AICAR from PRFAR using the ammonia provided by the HisH subunit. In Neisseria meningitidis serogroup C / serotype 2a (strain ATCC 700532 / DSM 15464 / FAM18), this protein is Imidazole glycerol phosphate synthase subunit HisF.